Consider the following 150-residue polypeptide: UPF0178 protein ASA_3749 (150 aa).

The protein belongs to the UPF0178 family.

The sequence is that of UPF0178 protein ASA_3749 from Aeromonas salmonicida (strain A449).